Consider the following 156-residue polypeptide: Arginine repressor (156 aa).

Belongs to the ArgR family.

The protein resides in the cytoplasm. Its pathway is amino-acid biosynthesis; L-arginine biosynthesis [regulation]. Regulates arginine biosynthesis genes. In Shigella boydii serotype 18 (strain CDC 3083-94 / BS512), this protein is Arginine repressor.